The following is a 654-amino-acid chain: Endoplasmic reticulum chaperone BiP (654 aa).

An N-terminal signal peptide occupies residues 1-18; the sequence is MKFPMVAAALLLLCAVRA. Positions 1–80 are required for interaction with ELAPOR1; the sequence is MKFPMVAAAL…EGERLIGDAA (80 aa). 36-39 provides a ligand contact to ATP; sequence GTTY. Ser86 carries the phosphoserine modification. Lys96 serves as a coordination point for ATP. Lys125 carries the N6-acetyllysine modification. The tract at residues 125–280 is nucleotide-binding (NBD); sequence KPYIQVDIGG…KKKTGKDVRK (156 aa). Tyr160 is subject to 3'-nitrotyrosine. Lys213 carries the post-translational modification N6-acetyllysine. 227–229 contacts ATP; it reads GGT. Lys271 carries the N6-acetyllysine modification. 293–300 serves as a coordination point for ATP; sequence EKAKRALS. Lys326 carries the post-translational modification N6-acetyllysine. A Glycyl lysine isopeptide (Lys-Gly) (interchain with G-Cter in SUMO2) cross-link involves residue Lys352. Residue Lys353 is modified to N6-acetyllysine; alternate. Residue Lys353 forms a Glycyl lysine isopeptide (Lys-Gly) (interchain with G-Cter in SUMO1); alternate linkage. Residue 364 to 367 participates in ATP binding; the sequence is GSTR. The tract at residues 409-419 is interdomain linker; that stretch reads QDTGDLVLLDV. Residues 420–500 are substrate-binding (SBD); it reads CPLTLGIETV…PRGVPQIEVT (81 aa). Lys447 is modified (N6-succinyllysine). Omega-N-methylarginine is present on Arg492. Thr518 is subject to O-AMP-threonine; alternate. Thr518 carries the post-translational modification Phosphothreonine; alternate. Lys585 carries the post-translational modification N6,N6,N6-trimethyllysine; by METTL21A; in vitro. Lys585 is subject to N6,N6-dimethyllysine; alternate. An N6-methyllysine; alternate modification is found at Lys585. Lys591 carries the N6-methyllysine modification. The disordered stretch occupies residues 632 to 654; it reads SKLYGSAGPPPTGEEDTSEKDEL. Thr643 and Thr648 each carry phosphothreonine. A compositionally biased stretch (acidic residues) spans 644–654; sequence GEEDTSEKDEL. A Phosphoserine modification is found at Ser649. Positions 651–654 match the Prevents secretion from ER motif; that stretch reads KDEL.

This sequence belongs to the heat shock protein 70 family. As to quaternary structure, monomer and homooligomer; homooligomerization via the interdomain linker inactivates the chaperone activity and acts as a storage of HSPA5/BiP molecules. Interacts with DNAJC1 (via J domain). Component of an EIF2 complex at least composed of CELF1/CUGBP1, CALR, CALR3, EIF2S1, EIF2S2, HSP90B1 and HSPA5. Part of a large chaperone multiprotein complex comprising DNAJB11, HSP90B1, HSPA5, HYOU, PDIA2, PDIA4, PDIA6, PPIB, SDF2L1, UGGT1 and very small amounts of ERP29, but not, or at very low levels, CALR nor CANX. Interacts with TMEM132A and TRIM21. May form a complex with ERLEC1, OS9, SEL1L and SYVN1. Interacts with DNAJC10. Interacts with DNAJB9/ERdj4; leading to recruit HSPA5/BiP to ERN1/IRE1. Interacts with ERN1/IRE1 (via luminal domain); the interaction takes place following interaction with DNAJB9/ERdj4 and leads to inactivate ERN1/IRE1, the interaction also competitively inhibits ERN1 interaction with MANF. Interacts directly with MANF (via SAP domain); the interaction inhibits ATP binding to HSPA5/BiP and subsequent nucleotide exchange. Interacts with EIF2AK3/PERK (via luminal domain); interaction leads to inactivate EIF2AK3/PERK. Interacts with MX1. Interacts with METTL23. Interacts with CEMIP; the interaction induces calcium leakage from the endoplasmic reticulum and cell migration. Interacts with PCSK4 form; the interaction takes place in the endoplasmic reticulum. Interacts with CIPC. Interacts with CCDC88B (via C-terminus); the interaction opposes ERN1-mediated JNK activation, protecting against apoptosis. Interacts with INPP5K; necessary for INPP5K localization at the endoplasmic reticulum. Interacts with LOXL2; leading to activate the ERN1/IRE1-XBP1 pathway of the unfolded protein response. Interacts with CLU under stressed condition; interaction increases CLU protein stability; facilitates its retrotranslocation and redistribution to the mitochondria; cooperatively suppress stress-induced apoptosis by stabilizing mitochondrial membrane integrity. Interacts with CCDC47. Interacts with CLN3. Interacts with ELAPOR1; may regulate the function of HSPA5 in apoptosis and cell proliferation. Interacts with CASP7. Interacts with ILDR2; the interaction stabilizes ILDR2 expression. Interacts with ADAM7. In terms of processing, in unstressed cells, AMPylation at Thr-518 by FICD inactivates the chaperome activity: AMPylated form is locked in a relatively inert state and only weakly stimulated by J domain-containing proteins. In response to endoplasmic reticulum stress, de-AMPylation by the same protein, FICD, restores the chaperone activity.

The protein resides in the endoplasmic reticulum lumen. It is found in the melanosome. It localises to the cytoplasm. The protein localises to the cell surface. The catalysed reaction is ATP + H2O = ADP + phosphate + H(+). Its activity is regulated as follows. The chaperone activity is regulated by ATP-induced allosteric coupling of the nucleotide-binding (NBD) and substrate-binding (SBD) domains. In the ADP-bound and nucleotide-free (apo) states, the two domains have little interaction. In contrast, in the ATP-bound state the two domains are tightly coupled, which results in drastically accelerated kinetics in both binding and release of polypeptide substrates. J domain-containing co-chaperones (DNAJB9/ERdj4 or DNAJC10/ERdj5) stimulate the ATPase activity and are required for efficient substrate recognition by HSPA5/BiP. Homooligomerization inactivates participating HSPA5/BiP protomers and probably act as reservoirs to store HSPA5/BiP molecules when they are not needed by the cell. Functionally, endoplasmic reticulum chaperone that plays a key role in protein folding and quality control in the endoplasmic reticulum lumen. Involved in the correct folding of proteins and degradation of misfolded proteins via its interaction with DNAJC10/ERdj5, probably to facilitate the release of DNAJC10/ERdj5 from its substrate. Acts as a key repressor of the EIF2AK3/PERK and ERN1/IRE1-mediated unfolded protein response (UPR). In the unstressed endoplasmic reticulum, recruited by DNAJB9/ERdj4 to the luminal region of ERN1/IRE1, leading to disrupt the dimerization of ERN1/IRE1, thereby inactivating ERN1/IRE1. Also binds and inactivates EIF2AK3/PERK in unstressed cells. Accumulation of misfolded protein in the endoplasmic reticulum causes release of HSPA5/BiP from ERN1/IRE1 and EIF2AK3/PERK, allowing their homodimerization and subsequent activation. Plays an auxiliary role in post-translational transport of small presecretory proteins across endoplasmic reticulum (ER). May function as an allosteric modulator for SEC61 channel-forming translocon complex, likely cooperating with SEC62 to enable the productive insertion of these precursors into SEC61 channel. Appears to specifically regulate translocation of precursors having inhibitory residues in their mature region that weaken channel gating. May also play a role in apoptosis and cell proliferation. The protein is Endoplasmic reticulum chaperone BiP of Cricetulus griseus (Chinese hamster).